Consider the following 176-residue polypeptide: Endothelin-2 (176 aa).

The N-terminal stretch at 1–22 is a signal peptide; it reads MVSPAWCSIALALLLALHEGKG. Residues 23 to 44 constitute a propeptide that is removed on maturation; it reads QAAATMEQPASAPKGRGPHLRF. Cystine bridges form between Cys-47/Cys-61 and Cys-49/Cys-57. The propeptide occupies 68–176; the sequence is VNTAGQTAPY…IPAHSRRRKR (109 aa). Positions 94–109 are endothelin-like; sequence CECSSAGDSACATFCH.

This sequence belongs to the endothelin/sarafotoxin family.

The protein localises to the secreted. Its function is as follows. Vasoconstrictor. This Rattus norvegicus (Rat) protein is Endothelin-2 (Edn2).